Reading from the N-terminus, the 517-residue chain is MANDQNKDYDKIIVLDYGSQYNQLITRRIREFGIYSELKPHTITAAEVKKIAPKGIIFSGGPNSVYDEGALGVDEDIFKLGIPILGVCYGMQLMAQRLGGDVEPADNREYGKADIEVTDASAKLFHDLPKDQTVWMSHGDLVTRVPDGFRTTATSVNCPISAMDDDDRKFYGIQFHAEVQNTQYGHEILHHFAFDVCHAEANWSMDDFITKQIAKIRAEVGDKRVLLGLSGGVDSSVVGVLLHKAIGTQLTSIFVDHGLLRKGEAEQVMDSLKGKFGLNIIKVNAKDRFLNDLRGVTDPEKKRKIIGRDFIEVFNEEAAKLNGIEFLAQGTLYTDVVESGTDTAQTIKSHHNVGGLPEDLKFKLIEPLNKLFKDEVRELGEKLGMPHSLVWRQPFPGPGLGIRVIGEVTEDKLEIVRDSDYILREEIAKHGLDKDIWQYFTVLPGIRSVGVMGDGRTYDYTIGIRAITSIDGMTADFARIDWDVLQEISSRIVNEVKHVNRVVYDITSKPPATIEWE.

A Glutamine amidotransferase type-1 domain is found at 11–202 (KIIVLDYGSQ…AFDVCHAEAN (192 aa)). Cys-88 functions as the Nucleophile in the catalytic mechanism. Residues His-176 and Glu-178 contribute to the active site. A GMPS ATP-PPase domain is found at 203-392 (WSMDDFITKQ…LGMPHSLVWR (190 aa)). Residue 230–236 (SGGVDSS) coordinates ATP.

As to quaternary structure, homodimer.

It catalyses the reaction XMP + L-glutamine + ATP + H2O = GMP + L-glutamate + AMP + diphosphate + 2 H(+). Its pathway is purine metabolism; GMP biosynthesis; GMP from XMP (L-Gln route): step 1/1. Its function is as follows. Catalyzes the synthesis of GMP from XMP. The chain is GMP synthase [glutamine-hydrolyzing] (guaA) from Lacticaseibacillus rhamnosus (Lactobacillus rhamnosus).